A 114-amino-acid polypeptide reads, in one-letter code: Fumarate reductase subunit D (114 aa).

A run of 3 helical transmembrane segments spans residues Val-24–Leu-44, Leu-50–Pro-70, and Gly-92–Ile-112.

This sequence belongs to the FrdD family. As to quaternary structure, part of an enzyme complex containing four subunits: a flavoprotein (FrdA), an iron-sulfur protein (FrdB), and two hydrophobic anchor proteins (FrdC and FrdD).

Its subcellular location is the cell inner membrane. Functionally, anchors the catalytic components of the fumarate reductase complex to the cell membrane, binds quinones. This chain is Fumarate reductase subunit D, found in Haemophilus influenzae (strain PittEE).